Here is a 605-residue protein sequence, read N- to C-terminus: DNA primase (605 aa).

Residues 38–62 (CPFHDEKTPSFTVSEDKQICHCFGC) form a CHC2-type zinc finger. Positions 260–341 (DEIVLLEGFM…NVFVIQLPSG (82 aa)) constitute a Toprim domain. Mg(2+)-binding residues include E266, D310, and D312.

Belongs to the DnaG primase family. Monomer. Interacts with DnaB. The cofactor is Zn(2+). Mg(2+) is required as a cofactor.

The enzyme catalyses ssDNA + n NTP = ssDNA/pppN(pN)n-1 hybrid + (n-1) diphosphate.. RNA polymerase that catalyzes the synthesis of short RNA molecules used as primers for DNA polymerase during DNA replication. This is DNA primase from Staphylococcus aureus (strain MW2).